A 641-amino-acid polypeptide reads, in one-letter code: Raffinose carrier protein (641 aa).

Positions 1 to 506 (MQEEHNYKWV…GQVIPLAQVN (506 aa)) are permease. 12 helical membrane-spanning segments follow: residues 25-45 (AFYSILSGYLIIFITSHLFDT), 57-77 (LVTLIIMVLRIVELFIDPFIG), 93-113 (WVVVGGTVSSIILLLLFTNLG), 120-140 (AMIYLVVFAILYITMDIFYSF), 168-188 (LGSTIGGGLVGVLVMPAVIFF), 201-221 (WFIFALIICLIALISAWGVGL), 253-273 (LLWAALAYLFYGVGINILGSL), 288-308 (FSILSIINIFLGLIATSLFPV), 317-337 (GVFAGCLVFMLGGIAIFTIAG), 342-362 (LVLLAATMFGFPQQMVFLVVL), 394-414 (FGGAISNGVVGQIAIISGMTT), and 429-449 (FKLTMFAFPALMLLIAIGIFS). The PTS EIIA type-1 domain occupies 507–611 (DPTFAAGTLG…DDTVIMTVTN (105 aa)). Residue H559 is modified to Phosphohistidine; by HPr.

In the N-terminal section; belongs to the sodium:galactoside symporter (TC 2.A.2) family.

It localises to the cell membrane. The protein is Raffinose carrier protein (rafP) of Pediococcus pentosaceus.